The following is a 151-amino-acid chain: Large ribosomal subunit protein uL13 (151 aa).

It belongs to the universal ribosomal protein uL13 family. In terms of assembly, part of the 50S ribosomal subunit.

Its function is as follows. This protein is one of the early assembly proteins of the 50S ribosomal subunit, although it is not seen to bind rRNA by itself. It is important during the early stages of 50S assembly. The chain is Large ribosomal subunit protein uL13 from Mycoplasma mycoides subsp. mycoides SC (strain CCUG 32753 / NCTC 10114 / PG1).